The following is a 563-amino-acid chain: Eukaryotic translation initiation factor 3 subunit D-1 (563 aa).

A disordered region spans residues 98–136 (VQKPPHQRGRFRNMRGRGGRGRNPRGGLNNHHHHGMTTL). Basic residues predominate over residues 100–120 (KPPHQRGRFRNMRGRGGRGRN). Residues 291 to 305 (EFDLLTVNESSVEPP) are RNA gate.

The protein belongs to the eIF-3 subunit D family. In terms of assembly, component of the eukaryotic translation initiation factor 3 (eIF-3) complex. The eIF-3 complex interacts with pix.

It is found in the cytoplasm. Its function is as follows. mRNA cap-binding component of the eukaryotic translation initiation factor 3 (eIF-3) complex, which is involved in protein synthesis of a specialized repertoire of mRNAs and, together with other initiation factors, stimulates binding of mRNA and methionyl-tRNAi to the 40S ribosome. The eIF-3 complex specifically targets and initiates translation of a subset of mRNAs involved in cell proliferation. In the eIF-3 complex, eif3d specifically recognizes and binds the 7-methylguanosine cap of a subset of mRNAs. This Drosophila pseudoobscura pseudoobscura (Fruit fly) protein is Eukaryotic translation initiation factor 3 subunit D-1.